We begin with the raw amino-acid sequence, 831 residues long: MKVHMHTKFCLICLLTFIFHHCNHCHEEHDHGPEALHRQHRGMTELEPSKFSKQAAENEKKYYIEKLFERYGENGRLSFFGLEKLLTNLGLGERKVVEINHEDLGHDHVSHLDILAVQEGKHFHSHNHQHSHNHLNSENQTVTSVSTKRNHKCDPEKETVEVSVKSDDKHMHDHNHRLRHHHRLHHHLDHNNTHHFHNDSITPSERGEPSNEPSTETNKTQEQSDVKLPKGKRKKKGRKSNENSEVITPGFPPNHDQGEQYEHNRVHKPDRVHNPGHSHVHLPERNGHDPGRGHQDLDPDNEGELRHTRKREAPHVKNNAIISLRKDLNEDDHHHECLNVTQLLKYYGHGANSPISTDLFTYLCPALLYQIDSRLCIEHFDKLLVEDINKDKNLVPEDEANIGASAWICGIISITVISLLSLLGVILVPIINQGCFKFLLTFLVALAVGTMSGDALLHLLPHSQGGHDHSHQHAHGHGHSHGHESNKFLEEYDAVLKGLVALGGIYLLFIIEHCIRMFKHYKQQRGKQKWFMKQNTEESTIGRKLSDHKLNNTPDSDWLQLKPLAGTDDSVVSEDRLNETELTDLEGQQESPPKNYLCIEEEKIIDHSHSDGLHTIHEHDLHAAAHNHHGENKTVLRKHNHQWHHKHSHHSHGPCHSGSDLKETGIANIAWMVIMGDGIHNFSDGLAIGAAFSAGLTGGISTSIAVFCHELPHELGDFAVLLKAGMTVKQAIVYNLLSAMMAYIGMLIGTAVGQYANNITLWIFAVTAGMFLYVALVDMLPEMLHGDGDNEEHGFCPVGQFILQNLGLLFGFAIMLVIALYEDKIVFDIQF.

A signal peptide spans 1-25 (MKVHMHTKFCLICLLTFIFHHCNHC). Residues 126–318 (HNHQHSHNHL…RKREAPHVKN (193 aa)) form a disordered region. Residues 138–147 (ENQTVTSVST) are compositionally biased toward polar residues. N-linked (GlcNAc...) asparagine glycosylation occurs at Asn-139. Positions 152-171 (KCDPEKETVEVSVKSDDKHM) are enriched in basic and acidic residues. Basic residues predominate over residues 172-188 (HDHNHRLRHHHRLHHHL). The span at 189–198 (DHNNTHHFHN) shows a compositional bias: basic and acidic residues. Residues Asn-198 and Asn-218 are each glycosylated (N-linked (GlcNAc...) asparagine). Residues 211 to 221 (NEPSTETNKTQ) are compositionally biased toward polar residues. Residues 229–238 (PKGKRKKKGR) are compositionally biased toward basic residues. Composition is skewed to basic and acidic residues over residues 256 to 273 (DQGE…DRVH) and 281 to 315 (HLPE…EAPH). N-linked (GlcNAc...) asparagine glycosylation is present at Asn-339. 2 consecutive transmembrane segments (helical) span residues 411–431 (IISI…VPII) and 438–458 (FLLT…ALLH). The disordered stretch occupies residues 464-484 (QGGHDHSHQHAHGHGHSHGHE). The helical transmembrane segment at 495–515 (VLKGLVALGGIYLLFIIEHCI) threads the bilayer. Thr-536 and Thr-553 each carry phosphothreonine. At Ser-591 the chain carries Phosphoserine. Transmembrane regions (helical) follow at residues 687 to 707 (AIGA…IAVF), 732 to 752 (IVYN…GTAV), 759 to 779 (ITLW…LVDM), and 801 to 821 (FILQ…IALY).

Belongs to the ZIP transporter (TC 2.A.5) family. Interacts with SLC39A6; which triggers cells to undergo EMT and mitosis. Found in a complex with SLC39A6, SLC39A10 and with the 'Ser-727' phosphorylated form of STAT3 throughout mitosis. Found in a complex with SLC39A6, SLC39A10 and with NCAM1; this complex controls NCAM1 phosphorylation and integration into focal adhesion complexes during epithelial-tomesenchymal transition. Found in a complex with SLC39A6, SLC39A10 and with GSK3B that controls NCAM1 phosphorylation. Post-translationally, undergoes N-terminal ectodomain shedding.

It localises to the cell membrane. It is found in the apical cell membrane. It carries out the reaction Zn(2+)(in) = Zn(2+)(out). Functionally, zinc-influx transporter. When associated with SLC39A6, the heterodimer formed by SLC39A10 and SLC39A6 mediates cellular zinc uptake to trigger cells to undergo epithelial-to-mesenchymal transition (EMT). SLC39A10-SLC39A6 heterodimers play also an essentiel role in initiating mitosis by importing zinc into cells to initiate a pathway resulting in the onset of mitosis. Plays an important for both mature B-cell maintenance and humoral immune responses. When associated with SLC39A10, the heterodimer controls NCAM1 phosphorylation and integration into focal adhesion complexes during EMT. This Homo sapiens (Human) protein is Zinc transporter ZIP10.